The following is a 1172-amino-acid chain: Lysylphosphatidylglycerol biosynthesis bifunctional protein LysX (1172 aa).

Positions 1-34 (MGLHLTVPGLRRDGRGVQSNSHDTSSKTTADISR) are disordered. Residues 1 to 663 (MGLHLTVPGL…LLHHDGSAPD (663 aa)) form a phosphatidylglycerol lysyltransferase region. A compositionally biased stretch (polar residues) spans 17 to 31 (VQSNSHDTSSKTTAD). A run of 7 helical transmembrane segments spans residues 80-100 (VPAA…LASV), 122-142 (FPDT…ALTA), 146-166 (IAWL…AAEI), 177-197 (FGEN…VLGY), 214-234 (AVWL…VELF), 272-292 (AIFG…LFLS), and 612-632 (VIPR…LPFS). The interval 664–1172 (VSGLRQVGLT…TLPFPLAKPH (509 aa)) is lysine--tRNA ligase. A DNA-binding region (OB) is located at residues 726–804 (VSVSGRIMRI…SLIVSGWRLI (79 aa)). The Mg(2+) site is built by Asp1084 and Glu1091.

It in the N-terminal section; belongs to the LPG synthetase family. This sequence in the C-terminal section; belongs to the class-II aminoacyl-tRNA synthetase family. Mg(2+) is required as a cofactor.

The protein localises to the cell membrane. The enzyme catalyses tRNA(Lys) + L-lysine + ATP = L-lysyl-tRNA(Lys) + AMP + diphosphate. The catalysed reaction is L-lysyl-tRNA(Lys) + a 1,2-diacyl-sn-glycero-3-phospho-(1'-sn-glycerol) = a 1,2-diacyl-sn-glycero-3-phospho-1'-(3'-O-L-lysyl)-sn-glycerol + tRNA(Lys). In terms of biological role, catalyzes the production of L-lysyl-tRNA(Lys)transfer and the transfer of a lysyl group from L-lysyl-tRNA(Lys) to membrane-bound phosphatidylglycerol (PG), which produces lysylphosphatidylglycerol (LPG), one of the components of the bacterial membrane with a positive net charge. LPG synthesis contributes to the resistance to cationic antimicrobial peptides (CAMPs) and likely protects M.tuberculosis against the CAMPs produced by competiting microorganisms (bacteriocins). In fact, the modification of anionic phosphatidylglycerol with positively charged L-lysine results in repulsion of the peptides. In Mycobacterium bovis (strain BCG / Pasteur 1173P2), this protein is Lysylphosphatidylglycerol biosynthesis bifunctional protein LysX (lysX).